An 896-amino-acid chain; its full sequence is Phosphatidate phosphatase LPIN2 (896 aa).

Residues 1–108 form an N-LIP region; the sequence is MNYVGQLAGQ…LPAYLATSPI (108 aa). The residue at position 106 (serine 106) is a Phosphoserine. The tract at residues 120–208 is disordered; that stretch reads TPLVKSGGDE…SSNASLKEEE (89 aa). A compositionally biased stretch (basic residues) spans 152–162; that stretch reads VKKKKRRRKKY. The short motif at 153-158 is the Nuclear localization signal element; it reads KKKKRR. Phosphoserine is present on residues serine 174, serine 186, serine 187, serine 243, and serine 303. 2 disordered regions span residues 370 to 405 and 420 to 459; these read AEAP…DIYL and FPKS…TECL. A compositionally biased stretch (basic residues) spans 387–396; the sequence is KKKGVHKRSQ. Over residues 426–448 the composition is skewed to polar residues; it reads EPGSRQWPESDTLSGSQSPQSVG. A Phosphoserine modification is found at serine 566. Positions 569–579 are enriched in basic and acidic residues; the sequence is KQLPESKEGKS. Positions 569–636 are disordered; sequence KQLPESKEGK…LSHGSTTSYK (68 aa). Acidic residues predominate over residues 604-617; that stretch reads SSSDEGSQELEESI. A C-LIP region spans residues 635-837; it reads YKKSLRLSSD…RIFTVNPKGE (203 aa). The short motif at 689-693 is the DXDXT motif element; the sequence is DIDGT. Residues 700-704 carry the LXXIL motif motif; the sequence is LGQIL.

This sequence belongs to the lipin family. Requires Mg(2+) as cofactor. Expressed in liver, lung, kidney, placenta, spleen, thymus, lymph node, prostate, testes, small intestine, and colon.

The protein resides in the nucleus. Its subcellular location is the cytoplasm. It localises to the cytosol. The protein localises to the endoplasmic reticulum membrane. The enzyme catalyses a 1,2-diacyl-sn-glycero-3-phosphate + H2O = a 1,2-diacyl-sn-glycerol + phosphate. Its activity is regulated as follows. Inhibited by N-ethylmaleimide. Acts as a magnesium-dependent phosphatidate phosphatase enzyme which catalyzes the conversion of phosphatidic acid to diacylglycerol during triglyceride, phosphatidylcholine and phosphatidylethanolamine biosynthesis in the endoplasmic reticulum membrane. Plays important roles in controlling the metabolism of fatty acids at different levels. Also acts as a nuclear transcriptional coactivator for PPARGC1A to modulate lipid metabolism. This Homo sapiens (Human) protein is Phosphatidate phosphatase LPIN2.